The sequence spans 427 residues: Histidine--tRNA ligase (427 aa).

It belongs to the class-II aminoacyl-tRNA synthetase family. In terms of assembly, homodimer.

The protein resides in the cytoplasm. It catalyses the reaction tRNA(His) + L-histidine + ATP = L-histidyl-tRNA(His) + AMP + diphosphate + H(+). The polypeptide is Histidine--tRNA ligase (Alteromonas mediterranea (strain DSM 17117 / CIP 110805 / LMG 28347 / Deep ecotype)).